The primary structure comprises 116 residues: Alpha-defensin 29 (116 aa).

Positions 1–19 are cleaved as a signal peptide; that stretch reads MKTLVLLSALVLPCFQVQA. A propeptide spanning residues 20–60 is cleaved from the precursor; the sequence is DPIQNTDEETKTEEQPEEEDQAVSVSFGGTEGSALQDVAQR. The interval 22–44 is disordered; that stretch reads IQNTDEETKTEEQPEEEDQAVSV. 9 tandem repeats follow at residues 65-67, 68-70, 71-73, 74-76, 77-79, 80-82, 83-85, 86-88, and 89-91. The 2 X 3 AA tandem repeats of C-R-X stretch occupies residues 65–70; that stretch reads CRKCRV. The segment at 71 to 79 is 3 X 3 AA tandem repeats of C-Q-X; sequence CQKCQVCQK. Residues 80–91 are 4 X 3 AA tandem repeats of C-P-X; it reads CPVCPTCPQCPK.

This sequence belongs to the alpha-defensin family. Small bowel.

Its subcellular location is the secreted. Its function is as follows. Apparent precursor of a secreted, cationic, proline- and cysteine-rich peptide that contains Cys-Pro-Xaa repeats. Unlike cryptdin, the proposed mature peptide region lacks the structural motif characteristic of defensins. The sequence is that of Alpha-defensin 29 from Mus musculus (Mouse).